The primary structure comprises 315 residues: Glutaminase (315 aa).

Positions 70, 120, 166, 173, 197, 249, and 267 each coordinate substrate.

The protein belongs to the glutaminase family. Homotetramer.

It carries out the reaction L-glutamine + H2O = L-glutamate + NH4(+). The polypeptide is Glutaminase (Rhizobium meliloti (strain 1021) (Ensifer meliloti)).